We begin with the raw amino-acid sequence, 139 residues long: Antitoxin HicB 2 (139 aa).

Residues 87–137 (MLQTRTSNAELARLLGTRPQEIQRIVSLSHSTKIDTIANALNALGKHLELV) enclose the HTH cro/C1-type domain. The H-T-H motif DNA-binding region spans 96–113 (ELARLLGTRPQEIQRIVS).

It belongs to the HicB antitoxin family. As to quaternary structure, probably forms a complex with the probable mRNA interferase HicA2 (its cognate toxin); when complexed with HicA inhibits the toxin activity.

Functionally, antitoxin component of a type II toxin-antitoxin (TA) system. Functions as an mRNA interferase antitoxin preventing effects of the HicA 2 toxin. This chain is Antitoxin HicB 2 (hicB2), found in Photorhabdus laumondii subsp. laumondii (strain DSM 15139 / CIP 105565 / TT01) (Photorhabdus luminescens subsp. laumondii).